The following is a 387-amino-acid chain: Structural protein ORF387 (387 aa).

Residues 315–387 adopt a coiled-coil conformation; that stretch reads KTFQEMVKVA…EEKNNTVKLS (73 aa). Residues 365–387 are disordered; it reads LTEEQQQQNETEEEEKNNTVKLS.

It is found in the virion. This is Structural protein ORF387 from Acidianus convivator (ATV).